The following is a 229-amino-acid chain: MELLLLSNSTLPGKAWLEHALPLVAEQLHGRRSAVFLPFAGVTQTWDDYTAKTAAVLAPLGVSVTGIHSVADPVAAIADAEVVIVGGGNTFQLLKESRERGLLAPIVAAVKRGALYIGWSAGANLACPTIRTTNDMPIVDPQGFDALGLFPLQINPHFTNALPEGHKGETREQRIRELLVVAPELTVIGLPEGNWIQVSKGQATLGGPNTTYVFNAGEEAVPLEAGHRF.

Residues Ser120, Asp135, and His157 each act as charge relay system in the active site.

The protein belongs to the peptidase S51 family.

The protein resides in the cytoplasm. It catalyses the reaction Dipeptidase E catalyzes the hydrolysis of dipeptides Asp-|-Xaa. It does not act on peptides with N-terminal Glu, Asn or Gln, nor does it cleave isoaspartyl peptides.. In terms of biological role, hydrolyzes dipeptides containing N-terminal aspartate residues. May play a role in allowing the cell to use peptide aspartate to spare carbon otherwise required for the synthesis of the aspartate family of amino acids. The protein is Peptidase E of Citrobacter koseri (strain ATCC BAA-895 / CDC 4225-83 / SGSC4696).